The chain runs to 277 residues: Shikimate dehydrogenase (NADP(+)) (277 aa).

Residues 17 to 19 (SRS) and Thr64 each bind shikimate. The active-site Proton acceptor is Lys68. Shikimate-binding residues include Asn88 and Asp103. NADP(+)-binding positions include 128–132 (GAGGS) and Leu217. Tyr219 contacts shikimate. Gly240 is a binding site for NADP(+).

This sequence belongs to the shikimate dehydrogenase family. Homodimer.

It catalyses the reaction shikimate + NADP(+) = 3-dehydroshikimate + NADPH + H(+). Its pathway is metabolic intermediate biosynthesis; chorismate biosynthesis; chorismate from D-erythrose 4-phosphate and phosphoenolpyruvate: step 4/7. In terms of biological role, involved in the biosynthesis of the chorismate, which leads to the biosynthesis of aromatic amino acids. Catalyzes the reversible NADPH linked reduction of 3-dehydroshikimate (DHSA) to yield shikimate (SA). This Afipia carboxidovorans (strain ATCC 49405 / DSM 1227 / KCTC 32145 / OM5) (Oligotropha carboxidovorans) protein is Shikimate dehydrogenase (NADP(+)).